We begin with the raw amino-acid sequence, 40 residues long: Photosystem II reaction center protein J (40 aa).

A helical membrane pass occupies residues 8 to 28 (IPLWLIGTVAGIPVIGLVGVF).

Belongs to the PsbJ family. In terms of assembly, PSII is composed of 1 copy each of membrane proteins PsbA, PsbB, PsbC, PsbD, PsbE, PsbF, PsbH, PsbI, PsbJ, PsbK, PsbL, PsbM, PsbT, PsbX, PsbY, PsbZ, Psb30/Ycf12, at least 3 peripheral proteins of the oxygen-evolving complex and a large number of cofactors. It forms dimeric complexes.

It localises to the plastid. The protein localises to the chloroplast thylakoid membrane. Functionally, one of the components of the core complex of photosystem II (PSII). PSII is a light-driven water:plastoquinone oxidoreductase that uses light energy to abstract electrons from H(2)O, generating O(2) and a proton gradient subsequently used for ATP formation. It consists of a core antenna complex that captures photons, and an electron transfer chain that converts photonic excitation into a charge separation. The chain is Photosystem II reaction center protein J from Hordeum jubatum (Foxtail barley).